Here is a 404-residue protein sequence, read N- to C-terminus: Homoserine O-succinyltransferase (404 aa).

The span at 1–25 (MTDIQADPAVTAADAAQADTSSPTA) shows a compositional bias: low complexity. Positions 1-30 (MTDIQADPAVTAADAAQADTSSPTAHQGKP) are disordered. An AB hydrolase-1 domain is found at 75–384 (NAVLICHALN…HGHDAFLLED (310 aa)). The Nucleophile role is filled by Ser179. Arg249 contributes to the substrate binding site. Catalysis depends on residues Asp344 and His377. Asp378 serves as a coordination point for substrate.

It belongs to the AB hydrolase superfamily. MetX family. Homodimer.

Its subcellular location is the cytoplasm. The catalysed reaction is L-homoserine + succinyl-CoA = O-succinyl-L-homoserine + CoA. Its pathway is amino-acid biosynthesis; L-methionine biosynthesis via de novo pathway; O-succinyl-L-homoserine from L-homoserine: step 1/1. Transfers a succinyl group from succinyl-CoA to L-homoserine, forming succinyl-L-homoserine. The chain is Homoserine O-succinyltransferase from Ralstonia pickettii (strain 12J).